Here is a 407-residue protein sequence, read N- to C-terminus: UDP-N-acetylglucosamine--N-acetylmuramyl-(pentapeptide) pyrophosphoryl-undecaprenol N-acetylglucosamine transferase (407 aa).

A disordered region spans residues 1–21 (MNNSVREPTRGRRGSPPVADA). UDP-N-acetyl-alpha-D-glucosamine-binding positions include 38 to 40 (TAG), Asn157, Ser228, and Gln324.

It belongs to the glycosyltransferase 28 family. MurG subfamily.

It is found in the cell membrane. The catalysed reaction is di-trans,octa-cis-undecaprenyl diphospho-N-acetyl-alpha-D-muramoyl-L-alanyl-D-glutamyl-meso-2,6-diaminopimeloyl-D-alanyl-D-alanine + UDP-N-acetyl-alpha-D-glucosamine = di-trans,octa-cis-undecaprenyl diphospho-[N-acetyl-alpha-D-glucosaminyl-(1-&gt;4)]-N-acetyl-alpha-D-muramoyl-L-alanyl-D-glutamyl-meso-2,6-diaminopimeloyl-D-alanyl-D-alanine + UDP + H(+). Its pathway is cell wall biogenesis; peptidoglycan biosynthesis. Cell wall formation. Catalyzes the transfer of a GlcNAc subunit on undecaprenyl-pyrophosphoryl-MurNAc-pentapeptide (lipid intermediate I) to form undecaprenyl-pyrophosphoryl-MurNAc-(pentapeptide)GlcNAc (lipid intermediate II). The chain is UDP-N-acetylglucosamine--N-acetylmuramyl-(pentapeptide) pyrophosphoryl-undecaprenol N-acetylglucosamine transferase from Mycobacterium leprae (strain TN).